The following is a 373-amino-acid chain: Type 2 DNA topoisomerase 6 subunit A (373 aa).

In terms of domain architecture, Topo IIA-type catalytic spans 15–153 (QGDTLAKERL…FHMRPEEDGA (139 aa)). Y110 acts as the O-(5'-phospho-DNA)-tyrosine intermediate in catalysis. Mg(2+) contacts are provided by E206 and D258.

This sequence belongs to the TOP6A family. Homodimer. Heterotetramer of two Top6A and two Top6B chains. Requires Mg(2+) as cofactor.

It carries out the reaction ATP-dependent breakage, passage and rejoining of double-stranded DNA.. In terms of biological role, relaxes both positive and negative superturns and exhibits a strong decatenase activity. The chain is Type 2 DNA topoisomerase 6 subunit A from Methanosarcina acetivorans (strain ATCC 35395 / DSM 2834 / JCM 12185 / C2A).